A 224-amino-acid polypeptide reads, in one-letter code: Phosphoribosylformylglycinamidine synthase subunit PurQ (224 aa).

The region spanning 4-224 (RIGVVTFPGT…YSALDAVLTG (221 aa)) is the Glutamine amidotransferase type-1 domain. Cysteine 87 (nucleophile) is an active-site residue. Residues histidine 195 and glutamate 197 contribute to the active site.

As to quaternary structure, part of the FGAM synthase complex composed of 1 PurL, 1 PurQ and 2 PurS subunits.

It localises to the cytoplasm. The enzyme catalyses N(2)-formyl-N(1)-(5-phospho-beta-D-ribosyl)glycinamide + L-glutamine + ATP + H2O = 2-formamido-N(1)-(5-O-phospho-beta-D-ribosyl)acetamidine + L-glutamate + ADP + phosphate + H(+). It carries out the reaction L-glutamine + H2O = L-glutamate + NH4(+). The protein operates within purine metabolism; IMP biosynthesis via de novo pathway; 5-amino-1-(5-phospho-D-ribosyl)imidazole from N(2)-formyl-N(1)-(5-phospho-D-ribosyl)glycinamide: step 1/2. Functionally, part of the phosphoribosylformylglycinamidine synthase complex involved in the purines biosynthetic pathway. Catalyzes the ATP-dependent conversion of formylglycinamide ribonucleotide (FGAR) and glutamine to yield formylglycinamidine ribonucleotide (FGAM) and glutamate. The FGAM synthase complex is composed of three subunits. PurQ produces an ammonia molecule by converting glutamine to glutamate. PurL transfers the ammonia molecule to FGAR to form FGAM in an ATP-dependent manner. PurS interacts with PurQ and PurL and is thought to assist in the transfer of the ammonia molecule from PurQ to PurL. The chain is Phosphoribosylformylglycinamidine synthase subunit PurQ from Mycobacterium bovis (strain ATCC BAA-935 / AF2122/97).